A 565-amino-acid polypeptide reads, in one-letter code: MNQTRVLLIFSWLTVATLLWMDWGKNKNETLEISASQNLGVDSNLELEHAVPQINAGAVPVQKDSQLIAVAPKVPVINVKTDVLQLKLDGFSVLAADLLRFPQSKDRGAKPIKLLTDDPNYPYSATTGWVSQSNSPVPNLSTFLPEQPGVSYKLANDQDRLVVPFVWTAANGVSIRRTFTFERGRYAILIRDEIRNGGETPWNAYVFRKLSRVPIPNILNRAMTNPDSFSFNGAVWYSEKGGYERRAFKDYMNDGGLNREIGGGWIALLQHHFFTAWIPQKDQASLYLLAQNGSRDIAELRGPAFTVAPGQSTTTEARLWVGPKLVEQITKEHVKGLDRVVDYSRFQLMALIGQGLFWILSHLNSLLHNWGWAIVGLVVLLRIAMYPLSAAQYKSAAKMRKFQPRLQQLKERYGEDRQKFQQAMMELYKKEKINPMGGCFPILIQMPIFFALYWVLVESVELRQAPWLGWIQDLTTRDPYFILPLLNIVIMWATQKLTPTPAGMDPIAGKMMQVMPLIFGVMMAFVPSGLALYWVINGGLNLLIQWWMIRQHADFSRKRSRGNIK.

6 consecutive transmembrane segments (helical) span residues 6-26 (VLLI…WGKN), 348-368 (LMAL…SLLH), 370-390 (WGWA…PLSA), 437-457 (GGCF…WVLV), 479-499 (PYFI…KLTP), and 516-536 (PLIF…YWVI).

This sequence belongs to the OXA1/ALB3/YidC family. Type 1 subfamily. In terms of assembly, interacts with the Sec translocase complex via SecD. Specifically interacts with transmembrane segments of nascent integral membrane proteins during membrane integration.

The protein localises to the cell inner membrane. In terms of biological role, required for the insertion and/or proper folding and/or complex formation of integral membrane proteins into the membrane. Involved in integration of membrane proteins that insert both dependently and independently of the Sec translocase complex, as well as at least some lipoproteins. Aids folding of multispanning membrane proteins. This Xylella fastidiosa (strain 9a5c) protein is Membrane protein insertase YidC.